Reading from the N-terminus, the 416-residue chain is Cysteate synthase (416 aa).

The residue at position 104 (Lys-104) is an N6-(pyridoxal phosphate)lysine. Asn-130 lines the pyridoxal 5'-phosphate pocket.

It belongs to the threonine synthase family. Cysteate synthase subfamily. As to quaternary structure, homotrimer. Pyridoxal 5'-phosphate is required as a cofactor.

It carries out the reaction O-phospho-L-serine + sulfite + H(+) = L-cysteate + phosphate. It functions in the pathway cofactor biosynthesis; coenzyme M biosynthesis. Is inhibited by AP3 (DL-2-amino-3-phosphonopropionate) and, to a lesser extent, by L-aspartate or AP4 (DL-2-amino-4-phosphonobutyrate). Is also inhibited by EDTA in vitro. In terms of biological role, specifically catalyzes the beta-elimination of phosphate from L-phosphoserine and the beta-addition of sulfite to the dehydroalanine intermediate to produce L-cysteate. Does not display threonine synthase activity like the paralog protein ThrC. This Methanosarcina acetivorans (strain ATCC 35395 / DSM 2834 / JCM 12185 / C2A) protein is Cysteate synthase.